The sequence spans 383 residues: Teichoic acid glycerol-phosphate primase (383 aa).

It belongs to the CDP-glycerol glycerophosphotransferase family.

Its subcellular location is the cell membrane. It catalyses the reaction N-acetyl-beta-D-mannosaminyl-(1-&gt;4)-N-acetyl-alpha-D-glucosaminyl di-trans,octa-cis-undecaprenyl diphosphate + CDP-glycerol = 4-O-[(2R)-glycerylphospho]-N-acetyl-beta-D-mannosaminyl-(1-&gt;4)-N-acetyl-alpha-D-glucosaminyl di-trans,octa-cis-undecaprenyl diphosphate + CMP + H(+). Its pathway is cell wall biogenesis; poly(ribitol phosphate) teichoic acid biosynthesis. Catalyzes the addition of a single glycerol phosphate residue to the prenoldiphosphate-linked disaccharide. The chain is Teichoic acid glycerol-phosphate primase (tarB) from Bacillus spizizenii (strain ATCC 23059 / NRRL B-14472 / W23) (Bacillus subtilis subsp. spizizenii).